Reading from the N-terminus, the 429-residue chain is Methylenetetrahydrofolate--tRNA-(uracil-5-)-methyltransferase TrmFO (429 aa).

Position 7-12 (7-12) interacts with FAD; that stretch reads GAGLAG.

This sequence belongs to the MnmG family. TrmFO subfamily. It depends on FAD as a cofactor.

The protein localises to the cytoplasm. It carries out the reaction uridine(54) in tRNA + (6R)-5,10-methylene-5,6,7,8-tetrahydrofolate + NADH + H(+) = 5-methyluridine(54) in tRNA + (6S)-5,6,7,8-tetrahydrofolate + NAD(+). The enzyme catalyses uridine(54) in tRNA + (6R)-5,10-methylene-5,6,7,8-tetrahydrofolate + NADPH + H(+) = 5-methyluridine(54) in tRNA + (6S)-5,6,7,8-tetrahydrofolate + NADP(+). Functionally, catalyzes the folate-dependent formation of 5-methyl-uridine at position 54 (M-5-U54) in all tRNAs. This Thermosipho africanus (strain TCF52B) protein is Methylenetetrahydrofolate--tRNA-(uracil-5-)-methyltransferase TrmFO.